Reading from the N-terminus, the 1647-residue chain is MAP kinase-activating death domain protein (1647 aa).

Residues 14 to 268 (YLVIVGARHP…VPVSGQKRVD (255 aa)) form the uDENN domain. Residues 108 to 122 (EKGEGGAGSRGKEGT) are compositionally biased toward basic and acidic residues. Residues 108 to 168 (EKGEGGAGSR…GKRRAKAGSR (61 aa)) form a disordered region. The segment covering 128–141 (SEEGGTESSESGSS) has biased composition (low complexity). Residues 142–157 (LQPLSADSTPDVNQSP) are compositionally biased toward polar residues. Ser156 is subject to Phosphoserine. Residues 158-167 (RGKRRAKAGS) show a composition bias toward basic residues. Residues 289–429 (RFTLVDFPLH…ESLELKKHLK (141 aa)) enclose the cDENN domain. The 135-residue stretch at 431–565 (ALASMSLNTQ…LNPTNYAFQR (135 aa)) folds into the dDENN domain. 2 disordered regions span residues 604–636 (ALSV…SSYS) and 678–842 (NQKE…STEG). Residues 615–630 (SEPTDDSGSDSMDYDD) are compositionally biased toward acidic residues. 2 positions are modified to phosphoserine: Ser689 and Ser692. Polar residues predominate over residues 689-699 (SENSQENPPLR). Over residues 700-712 (SSSSTTASSSPST) the composition is skewed to low complexity. Basic and acidic residues predominate over residues 750 to 768 (NVDRRQAEIGEGSVRRRIY). Polar residues predominate over residues 790-804 (ESYTPRFSQHVSGNR). Phosphoserine occurs at positions 813, 818, and 820. Positions 827-840 (RASSPNSTVSNTST) are enriched in low complexity. Phosphoserine occurs at positions 858, 862, 916, 921, and 930. 3 disordered regions span residues 913–941 (QKSS…SSEN), 1051–1110 (KEPD…DTRS), and 1146–1243 (VFDL…DSEI). The segment covering 932–941 (QGRSSNSSEN) has biased composition (polar residues). At Ser1059 the chain carries Phosphoserine. Thr1061 and Thr1066 each carry phosphothreonine. Ser1110 carries the post-translational modification Phosphoserine. Polar residues-rich tracts occupy residues 1158–1173 (QISA…SSQR), 1189–1207 (RSSS…SSGE), and 1234–1243 (SRGTLSDSEI). Thr1237 is subject to Phosphothreonine. Phosphoserine occurs at positions 1239 and 1270. In terms of domain architecture, Death spans 1340–1415 (GMDQGPQEMI…GLVYSQQINE (76 aa)).

The protein belongs to the MADD family. In terms of assembly, interacts (via death domain) with TNFRSF1A (via death domain). Interacts with PIDD1. Interacts with YWHAZ. Interacts (via death domain) with KIF1B; links the motor KIF1B to Rab3-carrying vesicles in anterograde synaptic vesicle transport. Interacts with KIF1A. Interacts (via uDENN domain) with RAB3A, RAB3B, RAB3C and RAB3D; the GTP-bound form of the Rab proteins is preferred for interaction. As to expression, expressed in testis, ovary, brain and heart. Expressed in spleen, thymus, prostate, testis, ovary, small instestine and colon. Expressed in liver. Not detected in the brain, breast, kidney, lung, ovary, pancreas, testis, uterus, stomach and thyroid. In terms of tissue distribution, expressed in the brain, breast, kidney, lung, ovary, pancreas, testis, uterus, stomach and thyroid.

It localises to the cell membrane. It is found in the cytoplasm. The protein resides in the cell projection. Its subcellular location is the axon. Guanyl-nucleotide exchange factor that regulates small GTPases of the Rab family. Converts GDP-bound inactive form of RAB27A and RAB27B to the GTP-bound active forms. Converts GDP-bound inactive form of RAB3A, RAB3C and RAB3D to the GTP-bound active forms, GTPases involved in synaptic vesicle exocytosis and vesicle secretion. Plays a role in synaptic vesicle formation and in vesicle trafficking at the neuromuscular junction. Involved in up-regulating a post-docking step of synaptic exocytosis in central synapses. Probably by binding to the motor proteins KIF1B and KIF1A, mediates motor-dependent transport of GTP-RAB3A-positive vesicles to the presynaptic nerve terminals. Plays a role in TNFA-mediated activation of the MAPK pathway, including ERK1/2. May link TNFRSF1A with MAP kinase activation. May be involved in the regulation of TNFA-induced apoptosis. The protein is MAP kinase-activating death domain protein of Homo sapiens (Human).